The chain runs to 104 residues: Large ribosomal subunit protein bL21 (104 aa).

The protein belongs to the bacterial ribosomal protein bL21 family. As to quaternary structure, part of the 50S ribosomal subunit. Contacts protein L20.

Functionally, this protein binds to 23S rRNA in the presence of protein L20. This chain is Large ribosomal subunit protein bL21, found in Clostridium tetani (strain Massachusetts / E88).